Consider the following 348-residue polypeptide: Erlin-1 (348 aa).

The Cytoplasmic segment spans residues M1–R7. Residues L8 to I28 form a helical membrane-spanning segment. The Lumenal segment spans residues E29–G348. The N-linked (GlcNAc...) asparagine glycan is linked to N108. Position 269 is an N6-acetyllysine (K269). Over residues D318 to S336 the composition is skewed to basic and acidic residues. Positions D318–G348 are disordered. Residues S339–G348 are compositionally biased toward polar residues.

It belongs to the band 7/mec-2 family. In terms of assembly, forms a heteromeric complex with ERLIN2. In complex with ERLIN2, interacts with RNF170. Interacts with AMFR and SYVN1. In terms of processing, deubiquitinated by USP25; leading to stabilization.

It is found in the endoplasmic reticulum membrane. Its function is as follows. Component of the ERLIN1/ERLIN2 complex which mediates the endoplasmic reticulum-associated degradation (ERAD) of inositol 1,4,5-trisphosphate receptors (IP3Rs). Involved in regulation of cellular cholesterol homeostasis by regulation the SREBP signaling pathway. Binds cholesterol and may promote ER retention of the SCAP-SREBF complex. The sequence is that of Erlin-1 from Mus musculus (Mouse).